A 73-amino-acid polypeptide reads, in one-letter code: uncharacterized protein (73 aa).

This is an uncharacterized protein from Ureaplasma parvum serovar 3 (strain ATCC 700970).